We begin with the raw amino-acid sequence, 168 residues long: Cyclic pyranopterin monophosphate synthase (168 aa).

Residues 81–83 and 117–118 each bind substrate; these read LCH and ME. The active site involves aspartate 132.

This sequence belongs to the MoaC family. As to quaternary structure, homohexamer; trimer of dimers.

The enzyme catalyses (8S)-3',8-cyclo-7,8-dihydroguanosine 5'-triphosphate = cyclic pyranopterin phosphate + diphosphate. It participates in cofactor biosynthesis; molybdopterin biosynthesis. In terms of biological role, catalyzes the conversion of (8S)-3',8-cyclo-7,8-dihydroguanosine 5'-triphosphate to cyclic pyranopterin monophosphate (cPMP). The sequence is that of Cyclic pyranopterin monophosphate synthase from Deinococcus radiodurans (strain ATCC 13939 / DSM 20539 / JCM 16871 / CCUG 27074 / LMG 4051 / NBRC 15346 / NCIMB 9279 / VKM B-1422 / R1).